The primary structure comprises 206 residues: N-(5'-phosphoribosyl)anthranilate isomerase (206 aa).

Belongs to the TrpF family.

It carries out the reaction N-(5-phospho-beta-D-ribosyl)anthranilate = 1-(2-carboxyphenylamino)-1-deoxy-D-ribulose 5-phosphate. The protein operates within amino-acid biosynthesis; L-tryptophan biosynthesis; L-tryptophan from chorismate: step 3/5. In Azotobacter vinelandii (strain DJ / ATCC BAA-1303), this protein is N-(5'-phosphoribosyl)anthranilate isomerase.